We begin with the raw amino-acid sequence, 427 residues long: Enolase 1 (427 aa).

Gln-162 contacts (2R)-2-phosphoglycerate. Catalysis depends on Glu-204, which acts as the Proton donor. Residues Asp-241, Glu-285, and Asp-312 each contribute to the Mg(2+) site. The (2R)-2-phosphoglycerate site is built by Lys-337, Arg-366, Ser-367, and Lys-388. The Proton acceptor role is filled by Lys-337.

It belongs to the enolase family. The cofactor is Mg(2+).

The protein resides in the cytoplasm. It is found in the secreted. The protein localises to the cell surface. The enzyme catalyses (2R)-2-phosphoglycerate = phosphoenolpyruvate + H2O. It functions in the pathway carbohydrate degradation; glycolysis; pyruvate from D-glyceraldehyde 3-phosphate: step 4/5. Its function is as follows. Catalyzes the reversible conversion of 2-phosphoglycerate (2-PG) into phosphoenolpyruvate (PEP). It is essential for the degradation of carbohydrates via glycolysis. The polypeptide is Enolase 1 (Chlorobaculum tepidum (strain ATCC 49652 / DSM 12025 / NBRC 103806 / TLS) (Chlorobium tepidum)).